We begin with the raw amino-acid sequence, 135 residues long: Protein Wnt-7c (135 aa).

Intrachain disulfides connect Cys-3/Cys-17 and Cys-5/Cys-12. Residue Ser-9 is the site of O-palmitoleoyl serine; by PORCN attachment. Asn-62, Asn-85, and Asn-98 each carry an N-linked (GlcNAc...) asparagine glycan. 3 cysteine pairs are disulfide-bonded: Cys-81/Cys-112, Cys-97/Cys-107, and Cys-134/Cys-135.

Belongs to the Wnt family. In terms of processing, palmitoleoylation is required for efficient binding to frizzled receptors. Depalmitoleoylation leads to Wnt signaling pathway inhibition.

It is found in the secreted. The protein localises to the extracellular space. The protein resides in the extracellular matrix. Its function is as follows. Ligand for members of the frizzled family of seven transmembrane receptors. Probable developmental protein. May be a signaling molecule which affects the development of discrete regions of tissues. Is likely to signal over only few cell diameters. In Xenopus laevis (African clawed frog), this protein is Protein Wnt-7c (wnt7c).